Here is a 185-residue protein sequence, read N- to C-terminus: Putative manganese efflux pump MntP (185 aa).

6 helical membrane-spanning segments follow: residues 3-23, 41-61, 70-90, 101-121, 123-143, and 165-185; these read PFAVVLLAFSMSVDAFAVSVG, AVFGVVEAITPVIGWVAGVAA, HWLAFGLLAAVGLHMLYAAVW, SFTVLMATAIGTSLDAMAVGV, LAFLNVNIVVVATAIGLATFL, and AVAGIALFGLGLSILIEHLTA.

Belongs to the MntP (TC 9.B.29) family.

It localises to the cell inner membrane. In terms of biological role, probably functions as a manganese efflux pump. The polypeptide is Putative manganese efflux pump MntP (Bradyrhizobium sp. (strain BTAi1 / ATCC BAA-1182)).